Here is a 182-residue protein sequence, read N- to C-terminus: MNLNKIVAGDDIPNDIYVIIEISSNSSPIKYEVDKKSGMLFVDRFIPTPMFYPCNYGYINHTLSLDGDPLDVLVPSHYPIKSSCVIHCKPIGILNMQDESGDDAKIIAVPKSKICQEYKNINDISDISELLKKQITHFFQNYKTLEKEKWVEIIGWGNCQDAKLEINDAYNRAKKNSIFLNK.

3 residues coordinate substrate: Lys-30, Arg-44, and Tyr-56. 3 residues coordinate Mg(2+): Asp-66, Asp-71, and Asp-103. Position 142 (Tyr-142) interacts with substrate.

This sequence belongs to the PPase family. Homohexamer. Mg(2+) serves as cofactor.

Its subcellular location is the cytoplasm. The catalysed reaction is diphosphate + H2O = 2 phosphate + H(+). Functionally, catalyzes the hydrolysis of inorganic pyrophosphate (PPi) forming two phosphate ions. The polypeptide is Inorganic pyrophosphatase (Buchnera aphidicola subsp. Acyrthosiphon pisum (strain APS) (Acyrthosiphon pisum symbiotic bacterium)).